A 432-amino-acid polypeptide reads, in one-letter code: Adenylosuccinate synthetase (432 aa).

GTP is bound by residues G13–K19 and G41–T43. D14 acts as the Proton acceptor in catalysis. D14 and G41 together coordinate Mg(2+). IMP contacts are provided by residues D14–K17, N39–H42, T130, R144, Q225, T240, and R304. The active-site Proton donor is H42. Substrate is bound at residue A300–R306. Residues R306, K332–D334, and S415–G417 contribute to the GTP site.

It belongs to the adenylosuccinate synthetase family. In terms of assembly, homodimer. It depends on Mg(2+) as a cofactor.

The protein localises to the cytoplasm. The enzyme catalyses IMP + L-aspartate + GTP = N(6)-(1,2-dicarboxyethyl)-AMP + GDP + phosphate + 2 H(+). The protein operates within purine metabolism; AMP biosynthesis via de novo pathway; AMP from IMP: step 1/2. Plays an important role in the de novo pathway of purine nucleotide biosynthesis. Catalyzes the first committed step in the biosynthesis of AMP from IMP. The polypeptide is Adenylosuccinate synthetase (Actinobacillus pleuropneumoniae serotype 3 (strain JL03)).